Consider the following 133-residue polypeptide: Probable 4-amino-4-deoxy-L-arabinose-phosphoundecaprenol flippase subunit ArnF (133 aa).

Topologically, residues 1 to 5 are cytoplasmic; it reads MKTGY. Residues 6 to 26 form a helical membrane-spanning segment; sequence LWAIASALLVTVAQLLLKIGM. Residues 27–47 are Periplasmic-facing; that stretch reads SELPDLQLEKQWFDLHWLWAN. A helical membrane pass occupies residues 48 to 68; sequence IIPISVVFVGLIGYVLSMVCW. The EamA domain maps to 51–125; it reads ISVVFVGLIG…IMLGVWLISQ (75 aa). Residues 69–80 lie on the Cytoplasmic side of the membrane; it reads LLTLRTIPLNKA. A helical transmembrane segment spans residues 81–101; it reads YPLISLSYVFVYILAVVLPWF. The Periplasmic segment spans residues 102 to 103; sequence QE. Residues 104-124 form a helical membrane-spanning segment; that stretch reads TLSWSKTIGIIFIMLGVWLIS. Topologically, residues 125–133 are cytoplasmic; sequence QKTEQTTSH.

Belongs to the ArnF family. As to quaternary structure, heterodimer of ArnE and ArnF.

The protein localises to the cell inner membrane. The protein operates within bacterial outer membrane biogenesis; lipopolysaccharide biosynthesis. Translocates 4-amino-4-deoxy-L-arabinose-phosphoundecaprenol (alpha-L-Ara4N-phosphoundecaprenol) from the cytoplasmic to the periplasmic side of the inner membrane. The protein is Probable 4-amino-4-deoxy-L-arabinose-phosphoundecaprenol flippase subunit ArnF of Proteus mirabilis (strain HI4320).